A 331-amino-acid chain; its full sequence is Laforin (331 aa).

The CBM20 domain occupies 1-124; sequence MLFRFGVVVP…NNLVDGVYCL (124 aa). Serine 25 carries the phosphoserine; by AMPK modification. Substrate is bound by residues tryptophan 32, lysine 87, 103–107, aspartate 197, aspartate 235, and arginine 241; that span reads GPHHD. The Tyrosine-protein phosphatase domain maps to 156–323; that stretch reads HYSRILPNIW…QQDFFQKFGK (168 aa). Residue cysteine 266 is the Phosphocysteine intermediate of the active site. The Glucan phosphatase signature motif CXAGXGR motif lies at 266 to 272; sequence CNAGVGR. Substrate is bound by residues 267-272 and tyrosine 304; that span reads NAGVGR.

It belongs to the protein-tyrosine phosphatase family. As to quaternary structure, homodimer. Interacts with itself. Interacts with PPP1R3B, PPP1R3C, PPP1R3D, HIRIP5, and EPM2AIP1. Binds glycogen and Lafora bodies. Interacts with NHLRC1/malin (via the NHL repeats). Forms a complex with NHLRC1/malin and HSP70. Interacts with PPP1R3D; in the presence of NHLC1/malin the interaction leads to ubiquitination and autophagic degradation of PPP1R3D. Interacts (via the phosphatase domain) with MAPT/Tau; the interaction dephosphorylates MAPT. Interacts with PRDM8. Post-translationally, polyubiquitinated by NHLRC1/malin. In terms of processing, phosphorylation on Ser-25 by AMPK affects the phosphatase activity of the enzyme and its ability to homodimerize and interact with NHLRC1, PPP1R3C or PRKAA2. Widely expressed.

It localises to the cytoplasm. It is found in the endoplasmic reticulum membrane. The protein localises to the cell membrane. The catalysed reaction is O-phospho-L-tyrosyl-[protein] + H2O = L-tyrosyl-[protein] + phosphate. It catalyses the reaction O-phospho-L-seryl-[protein] + H2O = L-seryl-[protein] + phosphate. The enzyme catalyses O-phospho-L-threonyl-[protein] + H2O = L-threonyl-[protein] + phosphate. Functionally, plays an important role in preventing glycogen hyperphosphorylation and the formation of insoluble aggregates, via its activity as glycogen phosphatase, and by promoting the ubiquitination of proteins involved in glycogen metabolism via its interaction with the E3 ubiquitin ligase NHLRC1/malin. Dephosphorylates phosphotyrosine and synthetic substrates, such as para-nitrophenylphosphate (pNPP), and has low activity with phosphoserine and phosphothreonine substrates (in vitro). Has also been shown to dephosphorylate MAPT. Shows strong phosphatase activity towards complex carbohydrates in vitro, avoiding glycogen hyperphosphorylation which is associated with reduced branching and formation of insoluble aggregates. Forms a complex with NHLRC1/malin and HSP70, which suppresses the cellular toxicity of misfolded proteins by promoting their degradation through the ubiquitin-proteasome system (UPS). Acts as a scaffold protein to facilitate PPP1R3C/PTG ubiquitination by NHLRC1/malin. Also promotes proteasome-independent protein degradation through the macroautophagy pathway. In Rattus norvegicus (Rat), this protein is Laforin (Epm2a).